The primary structure comprises 274 residues: Penicillin-insensitive murein endopeptidase (274 aa).

Residues 1–19 form the signal peptide; that stretch reads MNKTAIALLALLASSASLA. 3 cysteine pairs are disulfide-bonded: Cys-44/Cys-265, Cys-187/Cys-235, and Cys-216/Cys-223. Residues His-110, His-113, Asp-120, Asp-147, His-150, and His-211 each coordinate Zn(2+). The interval 228–274 is disordered; the sequence is LPPSGDGCGAELQSWFEPPKPGTTKPEKKTPPPLPPSCQALLDEHVI.

This sequence belongs to the peptidase M74 family. Dimer. It depends on Zn(2+) as a cofactor.

The protein localises to the periplasm. Inhibited by Zn(2+) at 10 mM and by metal chelating agents EDTA and 1,10-phenanthroline. Murein endopeptidase that cleaves the D-alanyl-meso-2,6-diamino-pimelyl amide bond that connects peptidoglycan strands. Likely plays a role in the removal of murein from the sacculus and could also play a role in the integration of nascent murein strands into the sacculus. This chain is Penicillin-insensitive murein endopeptidase (mepA), found in Escherichia coli (strain K12).